A 72-amino-acid polypeptide reads, in one-letter code: Translation initiation factor IF-1 (72 aa).

One can recognise an S1-like domain in the interval 1–72 (MSKQDVIELE…SRGRITWRKK (72 aa)).

The protein belongs to the IF-1 family. As to quaternary structure, component of the 30S ribosomal translation pre-initiation complex which assembles on the 30S ribosome in the order IF-2 and IF-3, IF-1 and N-formylmethionyl-tRNA(fMet); mRNA recruitment can occur at any time during PIC assembly.

The protein localises to the cytoplasm. One of the essential components for the initiation of protein synthesis. Stabilizes the binding of IF-2 and IF-3 on the 30S subunit to which N-formylmethionyl-tRNA(fMet) subsequently binds. Helps modulate mRNA selection, yielding the 30S pre-initiation complex (PIC). Upon addition of the 50S ribosomal subunit IF-1, IF-2 and IF-3 are released leaving the mature 70S translation initiation complex. This is Translation initiation factor IF-1 from Alkaliphilus oremlandii (strain OhILAs) (Clostridium oremlandii (strain OhILAs)).